Here is a 105-residue protein sequence, read N- to C-terminus: U-scoloptoxin(16)-Sm4a (105 aa).

An N-terminal signal peptide occupies residues Met-1–Gly-22.

The protein belongs to the scoloptoxin-16 family. Post-translationally, contains 4 disulfide bonds. In terms of tissue distribution, expressed by the venom gland.

It is found in the secreted. This chain is U-scoloptoxin(16)-Sm4a, found in Scolopendra morsitans (Tanzanian blue ringleg centipede).